Here is a 194-residue protein sequence, read N- to C-terminus: E3 ubiquitin-protein ligase RNF4 (194 aa).

The segment covering Met-1 to Gly-12 has biased composition (basic residues). The segment at Met-1–Thr-20 is required for ubiquitination activity. A disordered region spans residues Met-1 to Glu-36. Positions Pro-6–Leu-65 are mediates interaction with TRPS1. 4 short sequence motifs (SUMO interaction motif) span residues Ile-40–Val-43, Ile-50–Leu-53, Val-61–Val-63, and Val-71–Val-74. A phosphoserine mark is found at Ser-98 and Ser-99. Residues Cys-136, Cys-139, Cys-158, His-160, Cys-163, Cys-166, Cys-177, and Cys-180 each contribute to the Zn(2+) site. The segment at Cys-136–Arg-181 adopts an RING-type zinc-finger fold.

Homodimer (via RING-type zinc finger domain). Interacts with GSC2. Interacts with AR/the androgen receptor and TBP. Interacts with TCF20. Interacts with PATZ1. Interacts with TRPS1; negatively regulates TRPS1 transcriptional repressor activity. Interacts with PML (isoform PML-1, isoform PML-2, isoform PML-3, isoform PML-4, isoform PML-5 and isoform PML-6). Interacts with PRDM1/Blimp-1. In terms of processing, sumoylated; conjugated by one or two SUMO1 moieties. Post-translationally, autoubiquitinated. Widely expressed with highest levels in testis.

The protein localises to the cytoplasm. The protein resides in the nucleus. It is found in the nucleoplasm. Its subcellular location is the PML body. It catalyses the reaction S-ubiquitinyl-[E2 ubiquitin-conjugating enzyme]-L-cysteine + [acceptor protein]-L-lysine = [E2 ubiquitin-conjugating enzyme]-L-cysteine + N(6)-ubiquitinyl-[acceptor protein]-L-lysine.. It functions in the pathway protein modification; protein ubiquitination. E3 ubiquitin-protein ligase which binds polysumoylated chains covalently attached to proteins and mediates 'Lys-6'-, 'Lys-11'-, 'Lys-48'- and 'Lys-63'-linked polyubiquitination of those substrates and their subsequent targeting to the proteasome for degradation. Regulates the degradation of several proteins including PML and the transcriptional activator PEA3. Involved in chromosome alignment and spindle assembly, it regulates the kinetochore CENPH-CENPI-CENPK complex by targeting polysumoylated CENPI to proteasomal degradation. Regulates the cellular responses to hypoxia and heat shock through degradation of respectively EPAS1 and PARP1. Alternatively, it may also bind DNA/nucleosomes and have a more direct role in the regulation of transcription for instance enhancing basal transcription and steroid receptor-mediated transcriptional activation. Catalyzes ubiquitination of sumoylated PARP1 in response to PARP1 trapping to chromatin, leading to PARP1 removal from chromatin by VCP/p97. The sequence is that of E3 ubiquitin-protein ligase RNF4 from Rattus norvegicus (Rat).